The primary structure comprises 354 residues: GTPase Obg (354 aa).

The region spanning 1–159 (MQFIDHAEIE…KQLRLELKLL (159 aa)) is the Obg domain. An OBG-type G domain is found at 160–328 (AEVGIIGLPN…LLQEIWDVLD (169 aa)). Residues 166–173 (GLPNAGKS), 191–195 (FTTLI), 213–216 (DIPG), 280–283 (NKLD), and 309–311 (SAV) contribute to the GTP site. Mg(2+)-binding residues include Ser-173 and Thr-193.

The protein belongs to the TRAFAC class OBG-HflX-like GTPase superfamily. OBG GTPase family. In terms of assembly, monomer. Mg(2+) is required as a cofactor.

Its subcellular location is the cytoplasm. An essential GTPase which binds GTP, GDP and possibly (p)ppGpp with moderate affinity, with high nucleotide exchange rates and a fairly low GTP hydrolysis rate. Plays a role in control of the cell cycle, stress response, ribosome biogenesis and in those bacteria that undergo differentiation, in morphogenesis control. The polypeptide is GTPase Obg (Picosynechococcus sp. (strain ATCC 27264 / PCC 7002 / PR-6) (Agmenellum quadruplicatum)).